The following is a 202-amino-acid chain: Small ribosomal subunit protein uS4c (202 aa).

An S4 RNA-binding domain is found at 90-153 (MRLDNVTFRL…KSETIISKNI (64 aa)).

This sequence belongs to the universal ribosomal protein uS4 family. As to quaternary structure, part of the 30S ribosomal subunit. Contacts protein S5. The interaction surface between S4 and S5 is involved in control of translational fidelity.

It localises to the plastid. The protein localises to the chloroplast. Functionally, one of the primary rRNA binding proteins, it binds directly to 16S rRNA where it nucleates assembly of the body of the 30S subunit. Its function is as follows. With S5 and S12 plays an important role in translational accuracy. The sequence is that of Small ribosomal subunit protein uS4c (rps4) from Hypnum cupressiforme (Cypress-leaved plait-moss).